Here is a 348-residue protein sequence, read N- to C-terminus: Selenide, water dikinase (348 aa).

Cys17 is an active-site residue. ATP contacts are provided by residues Lys20 and 48–50; that span reads TSD. Asp51 contacts Mg(2+). ATP contacts are provided by residues Asp68, Asp91, and 139 to 141; that span reads GHT. Position 91 (Asp91) interacts with Mg(2+). A Mg(2+)-binding site is contributed by Asp227.

It belongs to the selenophosphate synthase 1 family. Class I subfamily. Homodimer. Requires Mg(2+) as cofactor.

It carries out the reaction hydrogenselenide + ATP + H2O = selenophosphate + AMP + phosphate + 2 H(+). Synthesizes selenophosphate from selenide and ATP. This Dechloromonas aromatica (strain RCB) protein is Selenide, water dikinase.